The following is a 565-amino-acid chain: Deformed epidermal autoregulatory factor 1 homolog (565 aa).

2 disordered regions span residues 29–62 (AAAAAESEAEEPVLSRDEDSEEDADSEAERETRR) and 162–189 (GLKGPAAPLTPGPQSPPTPLAPGQEKGG). A compositionally biased stretch (pro residues) spans 169–181 (PLTPGPQSPPTPL). T171 bears the Phosphothreonine mark. At S176 the chain carries Phosphoserine. T179 is subject to Phosphothreonine. Positions 193 to 273 (NWDPSVYDSE…QCLIQDGILN (81 aa)) constitute an SAND domain. Positions 301 to 316 (KRRKKENELPTTPVKK) match the Nuclear localization signal motif. The interval 403-478 (IAPFPEAALP…QLKTLFEQAK (76 aa)) is interaction with LMO4. At T432 the chain carries Phosphothreonine. Phosphoserine is present on residues S443 and S448. Residues C504, C507, C515, C518, C524, C528, H536, and C540 each coordinate Zn(2+). An MYND-type zinc finger spans residues 504–540 (CVNCGREAMSECTGCHKVNYCSTFCQRKDWKDHQHVC).

In terms of assembly, homodimer. Interacts with LMO4; LMO4 blocks export from nucleus. Interacts with LMO2 and CLIM2. May interact with the corepressors NCOR1 and NCRO2. Identified in a complex with XRCC5 and XRCC6. Interacts (via the SAND domain) with the DNA-PK complex subunit XRCC6; the interaction is direct and may be inhibited by DNA-binding. In terms of processing, may be phosphorylated by DNA-PK complex in a DNA independent manner (in vitro). As to expression, ubiquitous. Detected in brain, spleen, adrenal, lung, skeletal muscle, liver, kidney, and in developing germ cells in testis. In pituitary, restricted to hormone-secreting cell types.

It is found in the nucleus. The protein localises to the secreted. Its function is as follows. Transcription factor that binds to sequence with multiple copies of 5'-TTC[CG]G-3' present in its own promoter and that of the HNRPA2B1 gene. Down-regulates transcription of these genes. Binds to the retinoic acid response element (RARE) 5'-AGGGTTCACCGAAAGTTCA-3'. Activates the proenkephalin gene independently of promoter binding, probably through protein-protein interaction. When secreted, behaves as an inhibitor of cell proliferation, by arresting cells in the G0 or G1 phase. Regulates epithelial cell proliferation and side-branching in the mammary gland. Required for neural tube closure and skeletal patterning. Controls the expression of peripheral tissue antigens in pancreatic lymph nodes. Transcriptional activator of EIF4G3. May also involved in behavior. This is Deformed epidermal autoregulatory factor 1 homolog (Deaf1) from Rattus norvegicus (Rat).